Consider the following 552-residue polypeptide: Esterase E4 (552 aa).

A signal peptide spans 1-23 (MKNTCGILLNLFLFIGCFLTCSA). N81 carries an N-linked (GlcNAc...) asparagine glycan. A disulfide bond links C89 and C106. S214 serves as the catalytic Acyl-ester intermediate. A disulfide bridge links C266 with C277. An N-linked (GlcNAc...) asparagine glycan is attached at N269. The active-site Charge relay system is the E339. N-linked (GlcNAc...) asparagine glycosylation is found at N371, N404, and N443. The Charge relay system role is filled by H463.

Belongs to the type-B carboxylesterase/lipase family.

It catalyses the reaction a carboxylic ester + H2O = an alcohol + a carboxylate + H(+). Functionally, overproduction of nonspecific esterases is a common mechanism of resistance to organophosphate insecticides. In Myzus persicae (Green peach aphid), this protein is Esterase E4.